Reading from the N-terminus, the 406-residue chain is Cysteine desulfurase IscS (406 aa).

Pyridoxal 5'-phosphate-binding positions include 75 to 76, N155, Q183, and 203 to 205; these read AT and SSH. Residue K206 is modified to N6-(pyridoxal phosphate)lysine. Position 243 (T243) interacts with pyridoxal 5'-phosphate. Residue C330 is the Cysteine persulfide intermediate of the active site. C330 contacts [2Fe-2S] cluster.

It belongs to the class-V pyridoxal-phosphate-dependent aminotransferase family. NifS/IscS subfamily. As to quaternary structure, homodimer. Forms a heterotetramer with IscU, interacts with other sulfur acceptors. Pyridoxal 5'-phosphate is required as a cofactor.

It is found in the cytoplasm. The enzyme catalyses (sulfur carrier)-H + L-cysteine = (sulfur carrier)-SH + L-alanine. It participates in cofactor biosynthesis; iron-sulfur cluster biosynthesis. Its function is as follows. Master enzyme that delivers sulfur to a number of partners involved in Fe-S cluster assembly, tRNA modification or cofactor biosynthesis. Catalyzes the removal of elemental sulfur atoms from cysteine to produce alanine. Functions as a sulfur delivery protein for Fe-S cluster synthesis onto IscU, an Fe-S scaffold assembly protein, as well as other S acceptor proteins. This is Cysteine desulfurase IscS from Glaesserella parasuis serovar 5 (strain SH0165) (Haemophilus parasuis).